The following is a 104-amino-acid chain: Chromogranin-A (104 aa).

Cys-17 and Cys-38 are disulfide-bonded.

It belongs to the chromogranin/secretogranin protein family. In terms of assembly, dimer.

Its subcellular location is the cytoplasmic vesicle. It is found in the secretory vesicle. The protein localises to the secreted. In terms of biological role, chromogranin A probably has a paracrine role in the regulation of secretion or maturation. The chain is Chromogranin-A (CHGA) from Struthio camelus (Common ostrich).